The primary structure comprises 68 residues: Large ribosomal subunit protein uL29 (68 aa).

This sequence belongs to the universal ribosomal protein uL29 family.

The protein is Large ribosomal subunit protein uL29 of Limosilactobacillus fermentum (strain NBRC 3956 / LMG 18251) (Lactobacillus fermentum).